A 101-amino-acid chain; its full sequence is 2-amino-4-ketopentanoate thiolase alpha subunit (101 aa).

This sequence belongs to the OrtA family. Heterodimer with OrtB.

The enzyme catalyses D-alanine + acetyl-CoA = (2R)-2-amino-4-oxopentanoate + CoA. With respect to regulation, completely inhibited by p-chloromercuribenzoate (p-ClHgBzO) and acetyl-CoA, and partially inhibited by N-ethylmaleimide. Involved in the ornithine fermentation pathway. Catalyzes the thiolytic cleavage of 2-amino-4-ketopentanoate (AKP) with coenzyme A (CoA) to form acetyl-CoA and alanine. It is strictly specific for AKP. The sequence is that of 2-amino-4-ketopentanoate thiolase alpha subunit from Acetoanaerobium sticklandii (strain ATCC 12662 / DSM 519 / JCM 1433 / CCUG 9281 / NCIMB 10654 / HF) (Clostridium sticklandii).